The chain runs to 173 residues: Sterile alpha motif domain-containing protein 5 (173 aa).

The SAM domain maps to Met-1–Gln-65. Residues Thr-75–Ser-119 form a disordered region. Positions Gln-79–Asp-88 are enriched in pro residues.

In terms of assembly, interacts promiscuously (via SAM domain) with EPHA5, EPHA6, EPHA7, EPHA8, EPHB1, EPHB2, EPHB3 and EPHB4 (via SAM domain) (in vitro). As to expression, detected in biliary epithelial cells on bile ducts at the hepatic hilum (at protein level).

Its subcellular location is the cytoplasm. In Homo sapiens (Human), this protein is Sterile alpha motif domain-containing protein 5 (SAMD5).